Consider the following 246-residue polypeptide: 4-hydroxy-tetrahydrodipicolinate reductase (246 aa).

NAD(+) is bound by residues 8–13 (GALGRM), Asp34, 74–76 (GTT), and 101–104 (APNF). His131 acts as the Proton donor/acceptor in catalysis. His132 provides a ligand contact to (S)-2,3,4,5-tetrahydrodipicolinate. Lys135 (proton donor) is an active-site residue. 141–142 (GT) contributes to the (S)-2,3,4,5-tetrahydrodipicolinate binding site.

The protein belongs to the DapB family.

It localises to the cytoplasm. It carries out the reaction (S)-2,3,4,5-tetrahydrodipicolinate + NAD(+) + H2O = (2S,4S)-4-hydroxy-2,3,4,5-tetrahydrodipicolinate + NADH + H(+). The catalysed reaction is (S)-2,3,4,5-tetrahydrodipicolinate + NADP(+) + H2O = (2S,4S)-4-hydroxy-2,3,4,5-tetrahydrodipicolinate + NADPH + H(+). It participates in amino-acid biosynthesis; L-lysine biosynthesis via DAP pathway; (S)-tetrahydrodipicolinate from L-aspartate: step 4/4. Functionally, catalyzes the conversion of 4-hydroxy-tetrahydrodipicolinate (HTPA) to tetrahydrodipicolinate. This Thermobifida fusca (strain YX) protein is 4-hydroxy-tetrahydrodipicolinate reductase.